The chain runs to 164 residues: ATP synthase subunit b (164 aa).

The helical transmembrane segment at 10-30 (LLISQIVNFCLLAFLLNTFLY) threads the bilayer.

The protein belongs to the ATPase B chain family. F-type ATPases have 2 components, F(1) - the catalytic core - and F(0) - the membrane proton channel. F(1) has five subunits: alpha(3), beta(3), gamma(1), delta(1), epsilon(1). F(0) has three main subunits: a(1), b(2) and c(10-14). The alpha and beta chains form an alternating ring which encloses part of the gamma chain. F(1) is attached to F(0) by a central stalk formed by the gamma and epsilon chains, while a peripheral stalk is formed by the delta and b chains.

It localises to the cell membrane. F(1)F(0) ATP synthase produces ATP from ADP in the presence of a proton or sodium gradient. F-type ATPases consist of two structural domains, F(1) containing the extramembraneous catalytic core and F(0) containing the membrane proton channel, linked together by a central stalk and a peripheral stalk. During catalysis, ATP synthesis in the catalytic domain of F(1) is coupled via a rotary mechanism of the central stalk subunits to proton translocation. Its function is as follows. Component of the F(0) channel, it forms part of the peripheral stalk, linking F(1) to F(0). The protein is ATP synthase subunit b of Herpetosiphon aurantiacus (strain ATCC 23779 / DSM 785 / 114-95).